A 103-amino-acid polypeptide reads, in one-letter code: Large ribosomal subunit protein bL21 (103 aa).

Belongs to the bacterial ribosomal protein bL21 family. Part of the 50S ribosomal subunit. Contacts protein L20.

This protein binds to 23S rRNA in the presence of protein L20. The sequence is that of Large ribosomal subunit protein bL21 from Brevibacillus brevis (strain 47 / JCM 6285 / NBRC 100599).